The chain runs to 364 residues: Growth hormone secretagogue receptor type 1 (364 aa).

Residues 1–40 lie on the Extracellular side of the membrane; it reads MWNATPSEEPEPNVTLDLDWDASPGNDSLPDELLPLFPAP. Asn-13 and Asn-26 each carry an N-linked (GlcNAc...) asparagine glycan. The chain crosses the membrane as a helical span at residues 41–66; that stretch reads LLAGVTATCVALFVVGISGNLLTMLV. The Cytoplasmic segment spans residues 67–72; that stretch reads VSRFRE. A helical transmembrane segment spans residues 73–96; sequence LRTTTNLYLSSMAFSDLLIFLCMP. Residues 97 to 117 are Extracellular-facing; that stretch reads LDLVRLWQYRPWNFGDLLCKL. A disulfide bridge connects residues Cys-115 and Cys-197. Residues 118 to 139 form a helical membrane-spanning segment; it reads FQFVSESCTYATVLTITALSVE. The Cytoplasmic portion of the chain corresponds to 140–162; that stretch reads RYFAICFPLRAKVVVTKGRVKLV. A helical transmembrane segment spans residues 163 to 183; the sequence is ILVIWAVAFCSAGPIFVLVGV. Over 184–211 the chain is Extracellular; it reads EHENGTDPRDTNECRATEFAVRSGLLTV. N-linked (GlcNAc...) asparagine glycosylation occurs at Asn-187. Residues 212 to 235 form a helical membrane-spanning segment; the sequence is MVWVSSVFFFLPVFCLTVLYSLIG. Residues 236–263 are Cytoplasmic-facing; it reads RKLWRRRGDAAVGASLRDQNHKQTVKML. Residues 264 to 285 form a helical membrane-spanning segment; the sequence is AVVVFAFILCWLPFHVGRYLFS. Topologically, residues 286 to 302 are extracellular; it reads KSFEPGSLEIAQISQYC. A helical membrane pass occupies residues 303–326; the sequence is NLVSFVLFYLSAAINPILYNIMSK. At 327-364 the chain is on the cytoplasmic side; that stretch reads KYRVAVFKLLGFESFSQRKLSTLKDESSRAWTKSSINT.

This sequence belongs to the G-protein coupled receptor 1 family.

Its subcellular location is the cell membrane. Functionally, receptor for ghrelin, coupled to G-alpha-11 proteins. Stimulates growth hormone secretion. Also binds other growth hormone releasing peptides (GHRP) (e.g. Met-enkephalin and GHRP-6) as well as non-peptide, low molecular weight secretagogues (e.g. L-692,429, MK-0677, adenosine). The protein is Growth hormone secretagogue receptor type 1 (Ghsr) of Rattus norvegicus (Rat).